The primary structure comprises 161 residues: V-type proton ATPase 16 kDa proteolipid subunit c 2 (161 aa).

Over 1 to 15 (MSYDLETAEHAAYAP) the chain is Lumenal. The helical transmembrane segment at 16-36 (FFGYMGAASAQIFTVLGAAYG) threads the bilayer. The Cytoplasmic portion of the chain corresponds to 37-58 (TAKSAVGICSMGVMRPELIMKS). A helical membrane pass occupies residues 59 to 79 (VIPVIMAGIIGIYGLVVAMVL). At 80–98 (KGKVQAASAGYDLNKGFAH) the chain is on the lumenal side. Residues 99–119 (LAAGLTCGLCGLGAGYAIGIV) form a helical membrane-spanning segment. The Cytoplasmic segment spans residues 120-137 (GDAGVRGTAQQPRLFVGM). Residues 138–158 (ILILIFSEVLGLYGMIVALIL) traverse the membrane as a helical segment. Over 159–161 (GTS) the chain is Lumenal.

This sequence belongs to the V-ATPase proteolipid subunit family. In terms of assembly, V-ATPase is a heteromultimeric enzyme made up of two complexes: the ATP-hydrolytic V1 complex and the proton translocation V0 complex. The V1 complex consists of three catalytic AB heterodimers that form a heterohexamer, three peripheral stalks each consisting of EG heterodimers, one central rotor including subunits D and F, and the regulatory subunits C and H. The proton translocation complex V0 consists of the proton transport subunit a, a ring of proteolipid subunits c9c'', rotary subunit d, subunits e and f, and the accessory subunits vah-19/Ac45 and vah-20/PRR.

The protein localises to the membrane. Proton-conducting pore forming subunit of the V0 complex of vacuolar(H+)-ATPase (V-ATPase), a multisubunit enzyme composed of a peripheral complex (V1) that hydrolyzes ATP and a membrane integral complex (V0) that translocates protons. V-ATPase is responsible for acidifying and maintaining the pH of intracellular compartments and in some cell types, is targeted to the plasma membrane, where it is responsible for acidifying the extracellular environment. Involved in necrotic cell death. Required along with other vacuolar ATPase components for the removal of protein aggregates which form in immature oocytes in the distal gonad. This removal occurs as the oocytes mature and move to the proximal gonad, is triggered by the introduction of sperm through mating and occurs before fertilization. The introduction of sperm triggers V-ATPase accumulation in proximal oocytes and induces lysosomal acidification which leads to engulfing of protein aggregates by lysosomes and subsequent clearance of the aggregates. Lysosomal acidification also leads to changes in mitochondrial morphology and function. Mitochondria in distal immature oocytes are fragmented, produce high levels of reactive oxygen species (ROS) and have high membrane potential, indicative of metabolic inactivity. In contrast, mitochondria in proximal mature oocytes are tubular with lower ROS levels and membrane potential, indicative of an active metabolic state required for aggregate mobilization before clearance. The chain is V-type proton ATPase 16 kDa proteolipid subunit c 2 from Caenorhabditis briggsae.